Here is a 1077-residue protein sequence, read N- to C-terminus: MTNAMKVEGYPSMEWPTSLDIPLKASEELVGIDLETDLPDDPTDLKTLLVEENSEKEHWLTIALAYCNHGKTNEGIKLIEMALDVFQNSERASLHTFLTWAHLNLAKGQSLSVETKEHELTQAELNLKDAIGFDPTWIGNMLATVELYYQRGHYDKALETSDLFVKSIHAEDHRSGRQSKPNCLFLLLRAKLLYQKKNYMASLKIFQELLVINPVLQPDPRIGIGLCFWQLKDSKMAIKSWQRALQLNPKNTSASILVLLGEFRESFTNSTNDKTFKEAFTKALSDLNNIFSENQHNPVLLTLLQTYYYFKGDYQTVLDIYHHRILKMSPMIAKIVLSESSFWCGRAHYALGDYRKSFIMFQESLKKNEDNLLAKLGLGQTQIKNNLLEESIITFENLYKTNESLQELNYILGMLYAGKAFDAKTAKNTSAKEQSNLNEKALKYLERYLKLTLATKNQLVISRAYLVISQLYELQNQYKTSLDYLSKALEEMEFIKKEIPLEVLNNLACYHFINGDFIKADDLFKQAKAKVSDKDESVNITLEYNIARTNEKNDCEKSESIYSQVTSLHPAYIAARIRNLYLKFAQSKIEDSDMSTEMNKLLDLNKSDLEIRSFYGWYLKNSKERKNNEKSTTHNKETLVKYNSHDAYALISLANLYVTIARDGKKSRNPKEQEKSKHSYLKAIQLYQKVLQVDPFNIFAAQGLAIIFAESKRLGPALEILRKVRDSLDNEDVQLNLAHCYLEMREYGKAIENYELVLKKFDNEKTRPHILNLLGRAWYARAIKERSVNFYQKALENAKTALDLFVKESSKSKFIHSVKFNIALLHFQIAETLRRSNPKFRTVQQIKDSLEGLKEGLELFRELNDLKEFNMIPKEELEQRIQLGETTMKSALERSLNEQEEFEKEQSAKIDEARKILEENELKEQGWMKQEEEARRLKLEKQAEEYRKLQDEAQKLIQEREAMAISEHNVKDDSDLSDKDNEYDEEKPRQKRKRSTKTKNSGESKRRKAAKKTLSDSDEDDDDVVKKPSHNKGKKSQLSNEFIEDSDEEEAQMSGSEQNKNDDNDENNDNDDNDGLF.

TPR repeat units follow at residues K56–S89, I138–R174, C183–L216, P218–N251, P298–I332, S338–N371, L373–L405, F421–T455, S462–I495, L501–K534, I540–Y572, G664–N697, F699–E731, D732–E764, P768–A801, and A830–L863. Residues E959–D980 are compositionally biased toward basic and acidic residues. Residues E959–F1077 are disordered. 2 positions are modified to phosphoserine: S1015 and S1017. 2 stretches are compositionally biased toward acidic residues: residues F1042 to A1051 and D1063 to F1077.

In terms of assembly, component of the PAF1 complex which consists of at least CDC73, CTR9, LEO1, PAF1 and RTF1. Interacts with SPT6. Interacts with FACT subunits POB3 and SPT16.

It localises to the nucleus. The protein localises to the nucleoplasm. The PAF1 complex is a multifunctional complex. Involved in transcription initiation via genetic interactions with TATA-binding proteins. Involved in elongation. It regulates 3'-end formation of snR47 by modulating the recruitment or stable association of NRD1 and NAB3 with RNA polymerase II. Also has a role in transcription-coupled histone modification. Required for activation of RAD6 ubiquitin conjugate and the BRE1 ubiquitin ligase which ubiquitinate 'Lys-126' histone H2B. Activates the SET1 histone methyltransferase complex for methylation of 'Lys-4' of histone H3 and for methylation of 'Lys-73' of histone H3 by DOT1 and 'Lys-36' of histone H3 by SET2. In complex with PAF1, required for normal CLN1 and CLN2 G1 cyclin expression in late G1. Also has a role in chromosome segregation where it appears to be involved in microtubule placement. The sequence is that of RNA polymerase-associated protein CTR9 (CTR9) from Saccharomyces cerevisiae (strain ATCC 204508 / S288c) (Baker's yeast).